The primary structure comprises 480 residues: Ribosomal protein uS12 methylthiotransferase RimO (480 aa).

In terms of domain architecture, MTTase N-terminal spans 37 to 147 (NRIGFVSLGC…VLKHVHKYVP (111 aa)). Residues C46, C82, C111, C179, C183, and C186 each contribute to the [4Fe-4S] cluster site. In terms of domain architecture, Radical SAM core spans 165-402 (LTPKHYAYLK…MEVQAEISAE (238 aa)). The region spanning 405-471 (ARFVGRTMDI…EHDLWAELVD (67 aa)) is the TRAM domain.

Belongs to the methylthiotransferase family. RimO subfamily. It depends on [4Fe-4S] cluster as a cofactor.

It localises to the cytoplasm. It carries out the reaction L-aspartate(89)-[ribosomal protein uS12]-hydrogen + (sulfur carrier)-SH + AH2 + 2 S-adenosyl-L-methionine = 3-methylsulfanyl-L-aspartate(89)-[ribosomal protein uS12]-hydrogen + (sulfur carrier)-H + 5'-deoxyadenosine + L-methionine + A + S-adenosyl-L-homocysteine + 2 H(+). In terms of biological role, catalyzes the methylthiolation of an aspartic acid residue of ribosomal protein uS12. In Shewanella sp. (strain ANA-3), this protein is Ribosomal protein uS12 methylthiotransferase RimO.